A 267-amino-acid polypeptide reads, in one-letter code: Hydroxyethylthiazole kinase 2 (267 aa).

A substrate-binding site is contributed by methionine 41. Residues lysine 116 and threonine 166 each contribute to the ATP site. Residue glycine 193 coordinates substrate.

The protein belongs to the Thz kinase family. Requires Mg(2+) as cofactor.

It catalyses the reaction 5-(2-hydroxyethyl)-4-methylthiazole + ATP = 4-methyl-5-(2-phosphooxyethyl)-thiazole + ADP + H(+). It participates in cofactor biosynthesis; thiamine diphosphate biosynthesis; 4-methyl-5-(2-phosphoethyl)-thiazole from 5-(2-hydroxyethyl)-4-methylthiazole: step 1/1. In terms of biological role, catalyzes the phosphorylation of the hydroxyl group of 4-methyl-5-beta-hydroxyethylthiazole (THZ). The polypeptide is Hydroxyethylthiazole kinase 2 (Streptococcus pneumoniae (strain 70585)).